Consider the following 225-residue polypeptide: Endo-1,4-beta-xylanase (225 aa).

The first 31 residues, methionine 1–arginine 31, serve as a signal peptide directing secretion. Glutamine 32 bears the Pyrrolidone carboxylic acid mark. The GH11 domain maps to glutamine 32–alanine 222. The Nucleophile role is filled by glutamate 117. A disulfide bond links cysteine 141 and cysteine 185. The active-site Proton donor is glutamate 209.

The enzyme catalyses Endohydrolysis of (1-&gt;4)-beta-D-xylosidic linkages in xylans.. It participates in glycan degradation; xylan degradation. The polypeptide is Endo-1,4-beta-xylanase (XYNA) (Thermomyces lanuginosus (Humicola lanuginosa)).